Here is an 855-residue protein sequence, read N- to C-terminus: Mitochondrial 15S rRNA processing factor CCM1 (855 aa).

A disordered region spans residues 29–61 (PTAMRTRRRTRRHEREPNLRKRQGGSHSNLKEN). 3 PPR repeats span residues 234 to 265 (DVDM…MKKL), 317 to 351 (NKVN…SLSH), and 354 to 388 (DVAT…KMEP).

The protein belongs to the CCM1 family. Binds to mitochondrial small subunit 15S rRNA.

Its subcellular location is the mitochondrion. Its function is as follows. Regulates mitochondrial small subunit maturation by controlling 15S rRNA 5'-end processing. Localizes to the 5' precursor of the 15S rRNA in a position that is subsequently occupied by mS47 in the mature yeast mtSSU. Uses structure and sequence-specific RNA recognition, binding to a single-stranded region of the precursor and specifically recognizing bases -6 to -1. The exchange of Ccm1 for mS47 is coupled to the irreversible removal of precursor rRNA that is accompanied by conformational changes of the mitoribosomal proteins uS5m and mS26. These conformational changes signal completion of 5'-end rRNA processing through protection of the mature 5'-end of the 15S rRNA and stabilization of mS47. The removal of the 5' precursor together with the dissociation of Ccm1 may be catalyzed by the 5'-3' exoribonuclease Pet127. Involved in the specific removal of group I introns in mitochondrial encoded transcripts. This Eremothecium gossypii (strain ATCC 10895 / CBS 109.51 / FGSC 9923 / NRRL Y-1056) (Yeast) protein is Mitochondrial 15S rRNA processing factor CCM1 (CCM1).